The following is an 895-amino-acid chain: DNA mismatch repair protein MutS (895 aa).

Residue 607-614 coordinates ATP; it reads GPNMSGKS.

The protein belongs to the DNA mismatch repair MutS family.

This protein is involved in the repair of mismatches in DNA. It is possible that it carries out the mismatch recognition step. This protein has a weak ATPase activity. The protein is DNA mismatch repair protein MutS of Bacillus cytotoxicus (strain DSM 22905 / CIP 110041 / 391-98 / NVH 391-98).